The chain runs to 218 residues: Putative pre-16S rRNA nuclease (218 aa).

The protein belongs to the YqgF nuclease family.

Its subcellular location is the cytoplasm. Its function is as follows. Could be a nuclease involved in processing of the 5'-end of pre-16S rRNA. The sequence is that of Putative pre-16S rRNA nuclease from Thermotoga maritima (strain ATCC 43589 / DSM 3109 / JCM 10099 / NBRC 100826 / MSB8).